The primary structure comprises 132 residues: Fumarate reductase subunit C (132 aa).

Transmembrane regions (helical) follow at residues 30–50 (ATSVFAVWFCIVLLYGVLCFA), 70–90 (IVVFLNIITLIATLYHTVTYF), and 110–130 (VVRNALWAVTALVSVIALVLV).

It belongs to the FrdC family. In terms of assembly, part of an enzyme complex containing four subunits: a flavoprotein (FrdA), an iron-sulfur protein (FrdB), and two hydrophobic anchor proteins (FrdC and FrdD).

Its subcellular location is the cell inner membrane. Its function is as follows. Anchors the catalytic components of the fumarate reductase complex to the cell membrane, binds quinones. This is Fumarate reductase subunit C from Haemophilus influenzae (strain ATCC 51907 / DSM 11121 / KW20 / Rd).